The following is a 225-amino-acid chain: KDP operon transcriptional regulatory protein KdpE (225 aa).

A Response regulatory domain is found at 3 to 116 (NVLIVEDEQA…ELQARLRVAL (114 aa)). 4-aspartylphosphate is present on Asp52. A DNA-binding region (ompR/PhoB-type) is located at residues 126–225 (DPLVKFSDVT…ETGIGYRFML (100 aa)).

Post-translationally, phosphorylated by KdpD.

It localises to the cytoplasm. Member of the two-component regulatory system KdpD/KdpE involved in the regulation of the kdp operon. This is KDP operon transcriptional regulatory protein KdpE (kdpE) from Escherichia coli (strain K12).